A 100-amino-acid polypeptide reads, in one-letter code: NADH-quinone oxidoreductase subunit K (100 aa).

Transmembrane regions (helical) follow at residues 4–24 (FEYY…GVII), 28–48 (IIAM…AFVA), and 61–81 (FVFF…GLII).

This sequence belongs to the complex I subunit 4L family. As to quaternary structure, NDH-1 is composed of 14 different subunits. Subunits NuoA, H, J, K, L, M, N constitute the membrane sector of the complex.

It is found in the cell inner membrane. The catalysed reaction is a quinone + NADH + 5 H(+)(in) = a quinol + NAD(+) + 4 H(+)(out). Functionally, NDH-1 shuttles electrons from NADH, via FMN and iron-sulfur (Fe-S) centers, to quinones in the respiratory chain. The immediate electron acceptor for the enzyme in this species is believed to be ubiquinone. Couples the redox reaction to proton translocation (for every two electrons transferred, four hydrogen ions are translocated across the cytoplasmic membrane), and thus conserves the redox energy in a proton gradient. This is NADH-quinone oxidoreductase subunit K from Sulfurihydrogenibium sp. (strain YO3AOP1).